The chain runs to 317 residues: tRNA pseudouridine synthase B (317 aa).

Asp47 acts as the Nucleophile in catalysis.

Belongs to the pseudouridine synthase TruB family. Type 1 subfamily.

The catalysed reaction is uridine(55) in tRNA = pseudouridine(55) in tRNA. Its function is as follows. Responsible for synthesis of pseudouridine from uracil-55 in the psi GC loop of transfer RNAs. This Shewanella sp. (strain MR-7) protein is tRNA pseudouridine synthase B.